The sequence spans 619 residues: Sorting nexin-41 (619 aa).

The segment at 1-95 (MWNDEDNNPY…ELVPRRKPGG (95 aa)) is disordered. Residues 108-224 (PELPILITEA…WRFLDPNSSW (117 aa)) enclose the PX domain. The a 1,2-diacyl-sn-glycero-3-phospho-(1D-myo-inositol-3-phosphate) site is built by Arg-142, Ser-144, Lys-168, and Arg-191. The segment at 444–510 (YLSSSQQIQP…GSPSHKKAAS (67 aa)) is disordered. The segment covering 454–467 (PRREPPAQHRRDGS) has biased composition (basic and acidic residues).

This sequence belongs to the sorting nexin family.

It localises to the endosome membrane. The protein localises to the endomembrane system. In terms of biological role, may be required for cytoplasm to vacuole transport (Cvt) and pexophagy. This chain is Sorting nexin-41 (vsp-6), found in Neurospora crassa (strain ATCC 24698 / 74-OR23-1A / CBS 708.71 / DSM 1257 / FGSC 987).